Consider the following 1298-residue polypeptide: DNA-directed RNA polymerase subunit beta' (1298 aa).

Residues Cys-60, Cys-62, Cys-75, and Cys-78 each coordinate Zn(2+). Positions 535, 537, and 539 each coordinate Mg(2+). Zn(2+) is bound by residues Cys-877, Cys-954, Cys-961, and Cys-964.

Belongs to the RNA polymerase beta' chain family. The RNAP catalytic core consists of 2 alpha, 1 beta, 1 beta' and 1 omega subunit. When a sigma factor is associated with the core the holoenzyme is formed, which can initiate transcription. The cofactor is Mg(2+). Requires Zn(2+) as cofactor.

The catalysed reaction is RNA(n) + a ribonucleoside 5'-triphosphate = RNA(n+1) + diphosphate. DNA-dependent RNA polymerase catalyzes the transcription of DNA into RNA using the four ribonucleoside triphosphates as substrates. The chain is DNA-directed RNA polymerase subunit beta' from Micrococcus luteus (strain ATCC 4698 / DSM 20030 / JCM 1464 / CCM 169 / CCUG 5858 / IAM 1056 / NBRC 3333 / NCIMB 9278 / NCTC 2665 / VKM Ac-2230) (Micrococcus lysodeikticus).